We begin with the raw amino-acid sequence, 447 residues long: MTIGLEPAVSSKTKDKMEQDLSPIADKSCKENRELAKSGKLIEAIENLLITEKQCRQAEDSPSTSKIAAEIIKLCYEAGRLDLVNEKLVLLSKRRGQLRPAIKAIVQESMVYVDQITDMKQKLELIDTLRTISDGKIFVENERARLTKTLSKIKEDEGDIASAAKILQDLQVETYGTMEKREKITFFIDQMRICMNNKDFIRAQLIGNKVNRKTLAEDENQDLKIDYFKQMIRYFSHSANYIEIARCYLSIYDTPSVEKDTPQLLQTLKYICIYVILSASSNEQSDLLNRVYEFKPLTDIQNYKDLLNQFKTLELIRWSTFFELNKPELDSQTVFKTEPNAWEDLRKRVIEHNIRVISTYYQKISTARLAELLDLSLDESEKFVSDLVSNKTIFAKIDRPAGIATFTTTNDPNKVLNAWANNITSLLDLVEKTNHLVQREFMLHKIN.

The disordered stretch occupies residues 1-23; it reads MTIGLEPAVSSKTKDKMEQDLSP. Residues 240–411 enclose the PCI domain; the sequence is NYIEIARCYL…GIATFTTTND (172 aa).

It belongs to the proteasome subunit p55 family.

Its function is as follows. Acts as a regulatory subunit of the 26S proteasome which is involved in the ATP-dependent degradation of ubiquitinated proteins. The polypeptide is 26S proteasome non-ATPase regulatory subunit 12 (psmD12) (Dictyostelium discoideum (Social amoeba)).